The sequence spans 288 residues: Pyrroline-5-carboxylate reductase 3 (288 aa).

It belongs to the pyrroline-5-carboxylate reductase family. Homodecamer; composed of 5 homodimers.

It is found in the cytoplasm. It carries out the reaction L-proline + NADP(+) = (S)-1-pyrroline-5-carboxylate + NADPH + 2 H(+). It catalyses the reaction L-proline + NAD(+) = (S)-1-pyrroline-5-carboxylate + NADH + 2 H(+). It participates in amino-acid biosynthesis; L-proline biosynthesis; L-proline from L-glutamate 5-semialdehyde: step 1/1. In terms of biological role, oxidoreductase that catalyzes the last step in proline biosynthesis, which corresponds to the reduction of pyrroline-5-carboxylate (P5C) to L-proline using NAD(P)H. Proline is synthesized from either glutamate or ornithine; both are converted to P5C, and then to proline via pyrroline-5-carboxylate reductases (PYCRs). PYCR3 is exclusively linked to the biosynthesis of proline from ornithine. The polypeptide is Pyrroline-5-carboxylate reductase 3 (Danio rerio (Zebrafish)).